We begin with the raw amino-acid sequence, 537 residues long: Membrane protein insertase YidC (537 aa).

The next 4 helical transmembrane spans lie at 5–25 (LIIA…IFPT), 353–373 (GNYG…FFPL), 418–438 (VNPL…FGLY), and 495–515 (MLML…GLVI).

The protein belongs to the OXA1/ALB3/YidC family. Type 1 subfamily. As to quaternary structure, interacts with the Sec translocase complex via SecD. Specifically interacts with transmembrane segments of nascent integral membrane proteins during membrane integration.

The protein resides in the cell inner membrane. Its function is as follows. Required for the insertion and/or proper folding and/or complex formation of integral membrane proteins into the membrane. Involved in integration of membrane proteins that insert both dependently and independently of the Sec translocase complex, as well as at least some lipoproteins. Aids folding of multispanning membrane proteins. The chain is Membrane protein insertase YidC from Citrifermentans bemidjiense (strain ATCC BAA-1014 / DSM 16622 / JCM 12645 / Bem) (Geobacter bemidjiensis).